The sequence spans 112 residues: ATP synthase subunit c (112 aa).

Transmembrane regions (helical) follow at residues 36-56 and 81-101; these read FSVL…AIGM and MFIA…IALI.

This sequence belongs to the ATPase C chain family. In terms of assembly, F-type ATPases have 2 components, F(1) - the catalytic core - and F(0) - the membrane proton channel. F(1) has five subunits: alpha(3), beta(3), gamma(1), delta(1), epsilon(1). F(0) has three main subunits: a(1), b(2) and c(10-14). The alpha and beta chains form an alternating ring which encloses part of the gamma chain. F(1) is attached to F(0) by a central stalk formed by the gamma and epsilon chains, while a peripheral stalk is formed by the delta and b chains.

The protein localises to the cell inner membrane. Its function is as follows. F(1)F(0) ATP synthase produces ATP from ADP in the presence of a proton or sodium gradient. F-type ATPases consist of two structural domains, F(1) containing the extramembraneous catalytic core and F(0) containing the membrane proton channel, linked together by a central stalk and a peripheral stalk. During catalysis, ATP synthesis in the catalytic domain of F(1) is coupled via a rotary mechanism of the central stalk subunits to proton translocation. Functionally, key component of the F(0) channel; it plays a direct role in translocation across the membrane. A homomeric c-ring of between 10-14 subunits forms the central stalk rotor element with the F(1) delta and epsilon subunits. This chain is ATP synthase subunit c, found in Campylobacter jejuni (strain RM1221).